A 185-amino-acid chain; its full sequence is MVSSWRVQQAAQNIRAGAVIAYPTEAVWGLGCDPWDEEAVYRLLAIKLRPVEKGLILIADNIRQFDFLFEDFPELWLDRMASTWPGPNTWLVPHQNLLPEWITGIHETVALRVTDHPTVRELCALVGPLISTSANPAGRPAARSRLRVEQYFRGQINGVLGGSLGGRRNPSVIRDIATGQVMRAG.

The region spanning 4 to 185 (SWRVQQAAQN…IATGQVMRAG (182 aa)) is the YrdC-like domain.

Belongs to the SUA5 family. TsaC subfamily.

It localises to the cytoplasm. It carries out the reaction L-threonine + hydrogencarbonate + ATP = L-threonylcarbamoyladenylate + diphosphate + H2O. In terms of biological role, required for the formation of a threonylcarbamoyl group on adenosine at position 37 (t(6)A37) in tRNAs that read codons beginning with adenine. Catalyzes the conversion of L-threonine, HCO(3)(-)/CO(2) and ATP to give threonylcarbamoyl-AMP (TC-AMP) as the acyladenylate intermediate, with the release of diphosphate. This chain is Threonylcarbamoyl-AMP synthase, found in Pseudomonas syringae pv. tomato (strain ATCC BAA-871 / DC3000).